The following is a 185-amino-acid chain: Threonylcarbamoyl-AMP synthase (185 aa).

In terms of domain architecture, YrdC-like spans 4-185 (SWRVQQAARE…LATGNIVRPA (182 aa)).

Belongs to the SUA5 family. TsaC subfamily.

It is found in the cytoplasm. It catalyses the reaction L-threonine + hydrogencarbonate + ATP = L-threonylcarbamoyladenylate + diphosphate + H2O. Functionally, required for the formation of a threonylcarbamoyl group on adenosine at position 37 (t(6)A37) in tRNAs that read codons beginning with adenine. Catalyzes the conversion of L-threonine, HCO(3)(-)/CO(2) and ATP to give threonylcarbamoyl-AMP (TC-AMP) as the acyladenylate intermediate, with the release of diphosphate. In Pseudomonas fluorescens (strain Pf0-1), this protein is Threonylcarbamoyl-AMP synthase.